Consider the following 213-residue polypeptide: Glycerol-3-phosphate acyltransferase (213 aa).

A run of 6 helical transmembrane segments spans residues 2-22, 54-74, 80-100, 110-130, 143-163, and 165-185; these read ITIV…GLWI, MATF…PIMF, SPLI…FAGF, AGVV…VFFG, VTAS…GFIL, and NYDP…IIRH.

It belongs to the PlsY family. As to quaternary structure, probably interacts with PlsX.

The protein resides in the cell membrane. It catalyses the reaction an acyl phosphate + sn-glycerol 3-phosphate = a 1-acyl-sn-glycero-3-phosphate + phosphate. The protein operates within lipid metabolism; phospholipid metabolism. Functionally, catalyzes the transfer of an acyl group from acyl-phosphate (acyl-PO(4)) to glycerol-3-phosphate (G3P) to form lysophosphatidic acid (LPA). This enzyme utilizes acyl-phosphate as fatty acyl donor, but not acyl-CoA or acyl-ACP. This chain is Glycerol-3-phosphate acyltransferase, found in Streptococcus pneumoniae (strain Taiwan19F-14).